The sequence spans 428 residues: Probable G-protein coupled receptor (428 aa).

The Extracellular segment spans residues 1 to 46; sequence MMADKTSPMITSDHSISNFSTGLFGPHPTVPPDVGVVTSSQSQMKD. Residue Asn-18 is glycosylated (N-linked (GlcNAc...) asparagine). The helical transmembrane segment at 47–67 threads the bilayer; the sequence is LFGLFCMVTLNLIALLANTGV. Over 68–93 the chain is Cytoplasmic; sequence MVAIARAPHLKKFAFVCHLCAVDVLC. The chain crosses the membrane as a helical span at residues 94–114; the sequence is AILLMPLGIISSSPFFGTVVF. Topologically, residues 115-120 are extracellular; it reads TILECQ. The chain crosses the membrane as a helical span at residues 121 to 141; sequence VYIFLNVFLIWLSILTITAIS. Residues 142-162 are Cytoplasmic-facing; the sequence is VERYFYIVHPMRYEVKMTINL. A helical transmembrane segment spans residues 163-183; the sequence is VIGVMLLIWFKSLLLALVTLF. At 184–210 the chain is on the extracellular side; the sequence is GWPPYGHQSSIAASHCSLHASHSRLRG. Residues 211-231 form a helical membrane-spanning segment; sequence VFAVLFCVICFLAPVVVIFSV. Over 232-293 the chain is Cytoplasmic; it reads YSAVYKVARS…PERAFSGGKA (62 aa). A helical transmembrane segment spans residues 294 to 314; the sequence is ALTLAFIVGQFLVCWLPFFIF. The Extracellular portion of the chain corresponds to 315-428; that stretch reads HLQMSLTGSM…IPGQIPEEQA (114 aa). Over residues 398–414 the composition is skewed to polar residues; it reads SETHPSFANSNPRNMEN. Positions 398 to 428 are disordered; that stretch reads SETHPSFANSNPRNMENQAHKIPGQIPEEQA.

It belongs to the G-protein coupled receptor 1 family.

It localises to the cell membrane. This Oryzias latipes (Japanese rice fish) protein is Probable G-protein coupled receptor.